The sequence spans 284 residues: uncharacterized protein (284 aa).

This is an uncharacterized protein from Acanthamoeba polyphaga (Amoeba).